A 1320-amino-acid polypeptide reads, in one-letter code: MNSNRTSSSHNSRNLKILNASFDVPRPPGGGNSPLPSQGRSVRELEEQMSALRKENFNLKLRIYFLEEGQPGARADSSTESLSKQLIDAKIEIATLRKTVDVKMELLKDAARAISHHEELQRKADIDSQAIIDELQEQIHAYQMAESGGQPVENIAKTRKMLRLESEVQRLEEELVNIEARNVAARNELEFMLAERLESLTACEGKIQELAIKNSELVERLEKETASAESSNEAIDSLKVELEACRKENQDLVTSIRTLKHDMKRQVRSMKEAANTMDVQRQSILLLEATIKRKEKSCGSMQKNVLNYEALIAKLNAELETMRQQNVYFRELSENLQQKEVRQLDRGVAIVQPMRMTADAGRFVWQSGTIVAQEPLPLERQSAAATSNVSVSAVRLSSGPPPDQTYPVNGHDRAKYGLLQLFAAKLDWISAVPLALGHLALKIILLAMRLHSCLQNVHIPLRANRDLGAQLADKICELQEAQEKLKERERIHEQACRTIQKLMQKLSSQEKEIKKLNQENEQSANKENDCAKTVISPSSSGRSMSDNEASSQEMSTNLRVRYELKINEQEEKIKQLQTEVKKKTANLQNLVNKELWEKNREVERLTKLLANQQKTLPQISEESAGEADLQQSFTEAEYMRALERNKLLQRKVDVLFQRLADDQQNSAVIGQLRLELQQARTEVETADKWRLECVDVCSVLTNRLEELAGFLNSLLKHKDVLGVLAADRRNAMRKAVDRSLDLSKSLNMTLNITATSLADQSLAQLCNLSEILYTEGDASHKTFNSHEELHAATSMAPTVENLKAENKALKKELEKRRSSEGQRKERRSLPLPSQQFDNQSESEAWSEPDRKVSLARIGLDETSNSLAAPEQAISESESEGRTCATRQDRNRNSERIAQLEEQIAQKDERMLNVQCQMVELDNRYKQEQLRCLDITQQLEQLRAINEALTADLHAIGSHEEERMVELQRQLELKNQQIDQLKLAHSTLTADSQITEMELQALQQQMQEIEQLHADSVETLQSQLQKLKLDAVQQLEEHERLHREALERDWVALTTYQEQAQQLLELQRSLDYHQENEKELKQTLVENELATRALKKQLDESTLQASKAVMERTKAYNDKLQLEKRSEELRLQLEALKEEHQKLLQKRSNSSDVSQSGYTSEEVAVPMGPPSGQATTCKQAAAAVLGQRVNTSSPDLGIESDAGRISSVEVSNAQRAMLKTVEMKTEGSASPKAKSEESTSPDSKSNVATGAATVHDCAKVDLENAELRRKLIRTKRAFEDTYEKLRMANKAKAQVEKDIKNQILKTHNVLRNVRSNMENEL.

The segment at 20–41 (ASFDVPRPPGGGNSPLPSQGRS) is disordered. Residues 97–516 (RKTVDVKMEL…SSQEKEIKKL (420 aa)) adopt a coiled-coil conformation. Over residues 517-530 (NQENEQSANKENDC) the composition is skewed to basic and acidic residues. The segment at 517–554 (NQENEQSANKENDCAKTVISPSSSGRSMSDNEASSQEM) is disordered. Residues 535–554 (ISPSSSGRSMSDNEASSQEM) show a composition bias toward polar residues. The residue at position 545 (S545) is a Phosphoserine. Coiled coils occupy residues 626-654 (EADL…KVDV) and 712-983 (NSLL…LKLA). Residues 644–656 (RNKLLQRKVDVLF) carry the Nuclear localization signal motif. Position 782 is a phosphothreonine (T782). A Phosphoserine modification is found at S785. Positions 810–823 (KKELEKRRSSEGQR) are enriched in basic and acidic residues. Disordered regions lie at residues 810-849 (KKEL…SEPD) and 863-893 (SNSL…NRNS). Residues 831–843 (LPSQQFDNQSESE) show a composition bias toward polar residues. Residues S874, S876, S878, S1191, S1234, S1237, and S1239 each carry the phosphoserine modification. The disordered stretch occupies residues 1220-1249 (VEMKTEGSASPKAKSEESTSPDSKSNVATG). Polar residues predominate over residues 1237–1247 (STSPDSKSNVA).

Monomer. As to expression, developing visceral mesoderm of the midgut, the central and peripheral nervous system, and developing gonads. Isoform J: Expressed in ovaries, testis and embryos. Isoform A: Expressed in testis only.

The protein resides in the cytoplasm. The protein localises to the cytoskeleton. It localises to the microtubule organizing center. It is found in the centrosome. Its subcellular location is the flagellum basal body. The protein resides in the perinuclear region. Its function is as follows. Core component of the centrosome throughout spermatogenesis. May participate in mitotic spindle assembly and the mechanics of morphogenesis through an interaction with microtubules, either directly or indirectly. Is a target of several homeotic genes. The chain is Centrosomin (cnn) from Drosophila melanogaster (Fruit fly).